Reading from the N-terminus, the 660-residue chain is DNA mismatch repair protein MutL (660 aa).

The protein belongs to the DNA mismatch repair MutL/HexB family.

In terms of biological role, this protein is involved in the repair of mismatches in DNA. It is required for dam-dependent methyl-directed DNA mismatch repair. May act as a 'molecular matchmaker', a protein that promotes the formation of a stable complex between two or more DNA-binding proteins in an ATP-dependent manner without itself being part of a final effector complex. The sequence is that of DNA mismatch repair protein MutL from Streptococcus equi subsp. zooepidemicus (strain MGCS10565).